Here is a 444-residue protein sequence, read N- to C-terminus: MITIKKGLDLPIAGGPEQVIHDGPAIKHVATLGEEYIGMRPTMRIKVGDKVAKGQVIFEDKKNPGVKYTALASGTVTEINRGAKRVLQSVVIEIEGNDAVAFDKFDASQLDSLSAEQVRNNLIESGMWTALRTRPFSKVPAVDASPAGIFVTAIDTNPHAANPALVIAGHKDDFANGLKVLAKLTEGKVYLCKAPGADIPAANAEVHEFGGVHPAGLPGTHIHFILPASVTRTVWHVGYQDVIAIGQLFTTGELNNNRVIAIAGPKAVKPRLVRTLLGASIETLTTGEVAEGKVRKVSGSVLHGRTATGPHAYLGRYHLQVSLLEEDTEKEFIGWILPGSNKFSITRAFLGHLSPRRLFNMTTSTGGSDRAMVPIGNYERVMPLDILPTMLLRDLVSGDVDGAVALGALELDEEDLALCTFVCPGKYDYGSYLRGCLDTVEREG.

The protein belongs to the NqrA family. Composed of six subunits; NqrA, NqrB, NqrC, NqrD, NqrE and NqrF.

It catalyses the reaction a ubiquinone + n Na(+)(in) + NADH + H(+) = a ubiquinol + n Na(+)(out) + NAD(+). In terms of biological role, NQR complex catalyzes the reduction of ubiquinone-1 to ubiquinol by two successive reactions, coupled with the transport of Na(+) ions from the cytoplasm to the periplasm. NqrA to NqrE are probably involved in the second step, the conversion of ubisemiquinone to ubiquinol. This Shewanella amazonensis (strain ATCC BAA-1098 / SB2B) protein is Na(+)-translocating NADH-quinone reductase subunit A.